Consider the following 67-residue polypeptide: Large ribosomal subunit protein bL32 (67 aa).

The segment covering 1–19 (MAVPKRKMSRANTRARRAQ) has biased composition (basic residues). The disordered stretch occupies residues 1-20 (MAVPKRKMSRANTRARRAQW).

It belongs to the bacterial ribosomal protein bL32 family.

The protein is Large ribosomal subunit protein bL32 of Paenarthrobacter aurescens (strain TC1).